A 284-amino-acid chain; its full sequence is Non-selective voltage-gated ion channel VDAC3 (284 aa).

Residue Cys-2 is modified to N-acetylcysteine. Thr-4 carries the phosphothreonine modification. 3 positions are modified to N6-acetyllysine: Lys-12, Lys-15, and Lys-20. The next 2 membrane-spanning stretches (beta stranded) occupy residues 26–35 and 39–48; these read MVKIDLKTKS and VMEFSTSGHA. Residue Lys-54 forms a Glycyl lysine isopeptide (Lys-Gly) (interchain with G-Cter in ubiquitin) linkage. 3 consecutive transmembrane segments (beta stranded) span residues 55–65, 70–77, and 81–90; these read ASGNLETKYKV, LTFTQKWN, and TLGTEISWEN. At Lys-91 the chain carries N6-acetyllysine. Residues 96–105 form a beta stranded membrane-spanning segment; sequence LKLTLDTIFV. Glycyl lysine isopeptide (Lys-Gly) (interchain with G-Cter in ubiquitin) cross-links involve residues Lys-110 and Lys-111. The next 10 beta stranded transmembrane spans lie at 112 to 121, 124 to 131, 138 to 146, 151 to 159, 164 to 176, 179 to 186, 190 to 199, 203 to 212, 219 to 228, and 232 to 239; these read SGKLKASYKR, FSVGSNVD, TIYGWAVLA, LAGYQMSFD, KLSQ…GYKA, FQLHTHVN, EFGGSIYQKV, IETSINLAWT, RFGIAAKYML, and TSLSAKVN. Ser-242 is modified (phosphoserine). NAD(+) is bound by residues 243 to 245 and 261 to 265; these read LIG and SALID. A run of 2 beta stranded transmembrane segments spans residues 243 to 252 and 255 to 264; these read LIGLGYTQTL and GVKLTLSALI. At Lys-267 the chain carries N6-acetyllysine; alternate. Lys-267 participates in a covalent cross-link: Glycyl lysine isopeptide (Lys-Gly) (interchain with G-Cter in ubiquitin); alternate. Residues 274 to 283 traverse the membrane as a beta stranded segment; it reads HKVGLGFELE.

It belongs to the eukaryotic mitochondrial porin family. In terms of assembly, interacts with ARMC12 in a TBC1D21-dependent manner. Interacts with MISFA. In terms of processing, ubiquitinated by PRKN during mitophagy, leading to its degradation and enhancement of mitophagy. Deubiquitinated by USP30.

The protein resides in the mitochondrion outer membrane. The protein localises to the membrane. The enzyme catalyses chloride(in) = chloride(out). It carries out the reaction K(+)(in) = K(+)(out). Its function is as follows. Non-selective voltage-gated ion channel that mediates the transport of anions and cations through the mitochondrion outer membrane and plasma membrane. Forms a high-conducting channel with a stable open state and a voltage-induced closure with a mild preference for anions over cations. Involved in male fertility and sperm mitochondrial sheath formation. The sequence is that of Non-selective voltage-gated ion channel VDAC3 from Pongo abelii (Sumatran orangutan).